A 389-amino-acid polypeptide reads, in one-letter code: tRNA-specific 2-thiouridylase MnmA (389 aa).

ATP is bound by residues 35 to 42 (GMSGGVDS) and methionine 61. The tract at residues 121 to 123 (NPD) is interaction with target base in tRNA. Cysteine 126 functions as the Nucleophile in the catalytic mechanism. A disulfide bridge connects residues cysteine 126 and cysteine 223. Position 151 (glycine 151) interacts with ATP. The tract at residues 173–175 (KDQ) is interaction with tRNA. Residue cysteine 223 is the Cysteine persulfide intermediate of the active site. The segment at 335 to 336 (RY) is interaction with tRNA.

It belongs to the MnmA/TRMU family.

It is found in the cytoplasm. It catalyses the reaction S-sulfanyl-L-cysteinyl-[protein] + uridine(34) in tRNA + AH2 + ATP = 2-thiouridine(34) in tRNA + L-cysteinyl-[protein] + A + AMP + diphosphate + H(+). Functionally, catalyzes the 2-thiolation of uridine at the wobble position (U34) of tRNA, leading to the formation of s(2)U34. In Actinobacillus pleuropneumoniae serotype 5b (strain L20), this protein is tRNA-specific 2-thiouridylase MnmA.